The chain runs to 361 residues: DLYKIAEICRDKGVKSYLTVNTVIYDEDMTLMRSVIDAAQKAQISAIIASDVAAMTYANEIGVEVHLSTQLNISNAEALRFIALAMWSYWQRAEYGSGTYNPRDHRQGHICGPKGHPVRIEMFAHGALCMAVSGKCYLSLHEHNTSANRGACAQICRRGYTVKDSGLELDIENQYIMSPKDLKTIHFINKMMDAGVRVFKIEGRARGPEYVYTVCRCYKEAIEAYCNGTYDEESIGRWDEQLATVFNRGFWDGYYLGQRLGEWTHRYGSGRTRQKTYVGKGIKYFSRLGVAEFEIESGELHIGDEIVITGPTTGVIIQKVEEIRYELQTVEKATKGQRISIPVKEKVRPSDKLYRFDKREE.

The protein belongs to the peptidase U32 family. As to quaternary structure, homodimer. Requires a metal cation as cofactor.

With respect to regulation, activity somewhat enhanced by calcium ions, inhibited by zinc and Fe(3+) ions and by p-chloromercuribenzoic acid and EDTA. Activity is enhanced by salivary peptide cystatin and reduced by salivary peptide histatin. In terms of biological role, has collagenase activity. Active on soluble collagen, reconstituted type I collagen, heat denatured type I collagen and azocoll, but not gelatin or the synthetic bacterial collagenase substrate PZ-PLGPA. May play a role in virulence. This is Collagenase from Porphyromonas gingivalis (Bacteroides gingivalis).